A 612-amino-acid polypeptide reads, in one-letter code: Dihydroxy-acid dehydratase (612 aa).

Asp-81 provides a ligand contact to Mg(2+). Cys-122 provides a ligand contact to [2Fe-2S] cluster. Residues Asp-123 and Lys-124 each contribute to the Mg(2+) site. At Lys-124 the chain carries N6-carboxylysine. Cys-193 contacts [2Fe-2S] cluster. Glu-489 is a binding site for Mg(2+). The active-site Proton acceptor is Ser-515.

This sequence belongs to the IlvD/Edd family. As to quaternary structure, homodimer. It depends on [2Fe-2S] cluster as a cofactor. The cofactor is Mg(2+).

It carries out the reaction (2R)-2,3-dihydroxy-3-methylbutanoate = 3-methyl-2-oxobutanoate + H2O. The catalysed reaction is (2R,3R)-2,3-dihydroxy-3-methylpentanoate = (S)-3-methyl-2-oxopentanoate + H2O. The protein operates within amino-acid biosynthesis; L-isoleucine biosynthesis; L-isoleucine from 2-oxobutanoate: step 3/4. It functions in the pathway amino-acid biosynthesis; L-valine biosynthesis; L-valine from pyruvate: step 3/4. Functions in the biosynthesis of branched-chain amino acids. Catalyzes the dehydration of (2R,3R)-2,3-dihydroxy-3-methylpentanoate (2,3-dihydroxy-3-methylvalerate) into 2-oxo-3-methylpentanoate (2-oxo-3-methylvalerate) and of (2R)-2,3-dihydroxy-3-methylbutanoate (2,3-dihydroxyisovalerate) into 2-oxo-3-methylbutanoate (2-oxoisovalerate), the penultimate precursor to L-isoleucine and L-valine, respectively. The polypeptide is Dihydroxy-acid dehydratase (Stenotrophomonas maltophilia (strain K279a)).